The following is a 481-amino-acid chain: Glutamyl-tRNA(Gln) amidotransferase subunit A (481 aa).

Residues Lys74 and Ser149 each act as charge relay system in the active site. Ser173 acts as the Acyl-ester intermediate in catalysis.

The protein belongs to the amidase family. GatA subfamily. As to quaternary structure, heterotrimer of A, B and C subunits.

The catalysed reaction is L-glutamyl-tRNA(Gln) + L-glutamine + ATP + H2O = L-glutaminyl-tRNA(Gln) + L-glutamate + ADP + phosphate + H(+). Functionally, allows the formation of correctly charged Gln-tRNA(Gln) through the transamidation of misacylated Glu-tRNA(Gln) in organisms which lack glutaminyl-tRNA synthetase. The reaction takes place in the presence of glutamine and ATP through an activated gamma-phospho-Glu-tRNA(Gln). The protein is Glutamyl-tRNA(Gln) amidotransferase subunit A of Francisella tularensis subsp. tularensis (strain FSC 198).